The sequence spans 428 residues: Enolase (428 aa).

Gln163 lines the (2R)-2-phosphoglycerate pocket. The Proton donor role is filled by Glu205. Positions 242, 286, and 313 each coordinate Mg(2+). Positions 338, 367, 368, and 389 each coordinate (2R)-2-phosphoglycerate. Lys338 acts as the Proton acceptor in catalysis.

It belongs to the enolase family. Mg(2+) serves as cofactor.

It localises to the cytoplasm. It is found in the secreted. The protein localises to the cell surface. The catalysed reaction is (2R)-2-phosphoglycerate = phosphoenolpyruvate + H2O. It functions in the pathway carbohydrate degradation; glycolysis; pyruvate from D-glyceraldehyde 3-phosphate: step 4/5. In terms of biological role, catalyzes the reversible conversion of 2-phosphoglycerate (2-PG) into phosphoenolpyruvate (PEP). It is essential for the degradation of carbohydrates via glycolysis. In Bordetella petrii (strain ATCC BAA-461 / DSM 12804 / CCUG 43448), this protein is Enolase.